Reading from the N-terminus, the 155-residue chain is Xanthine-guanine phosphoribosyltransferase (155 aa).

Residues 37–38 (RG), Arg-69, and 90–98 (DDLVDTGGT) contribute to the 5-phospho-alpha-D-ribose 1-diphosphate site. Arg-69 is a GMP binding site. Asp-91 serves as a coordination point for Mg(2+). Residues Asp-94 and Ile-137 each contribute to the guanine site. Xanthine contacts are provided by Asp-94 and Ile-137. GMP contacts are provided by residues 94–98 (DTGGT) and 136–137 (WI).

The protein belongs to the purine/pyrimidine phosphoribosyltransferase family. XGPT subfamily. As to quaternary structure, homotetramer. Mg(2+) is required as a cofactor.

Its subcellular location is the cell inner membrane. It catalyses the reaction GMP + diphosphate = guanine + 5-phospho-alpha-D-ribose 1-diphosphate. The enzyme catalyses XMP + diphosphate = xanthine + 5-phospho-alpha-D-ribose 1-diphosphate. It carries out the reaction IMP + diphosphate = hypoxanthine + 5-phospho-alpha-D-ribose 1-diphosphate. It functions in the pathway purine metabolism; GMP biosynthesis via salvage pathway; GMP from guanine: step 1/1. It participates in purine metabolism; XMP biosynthesis via salvage pathway; XMP from xanthine: step 1/1. Its function is as follows. Purine salvage pathway enzyme that catalyzes the transfer of the ribosyl-5-phosphate group from 5-phospho-alpha-D-ribose 1-diphosphate (PRPP) to the N9 position of the 6-oxopurines guanine and xanthine to form the corresponding ribonucleotides GMP (guanosine 5'-monophosphate) and XMP (xanthosine 5'-monophosphate), with the release of PPi. To a lesser extent, also acts on hypoxanthine. The sequence is that of Xanthine-guanine phosphoribosyltransferase from Aeromonas salmonicida (strain A449).